The sequence spans 122 residues: MPRIIGIDIPAKKKLKISLTYIYGIGPALSEEIIAKLQLNPEARAAELTEEEIGRLNSLLQSDYVVEGDLRRRVQSDIKRLISIHAYRGQRHRLSLPVRGQRTKTNSRTRKGKRKTVAGKKK.

The segment at 93–122 (RLSLPVRGQRTKTNSRTRKGKRKTVAGKKK) is disordered. Residues 101–122 (QRTKTNSRTRKGKRKTVAGKKK) show a composition bias toward basic residues.

This sequence belongs to the universal ribosomal protein uS13 family. Part of the 30S ribosomal subunit. Forms a loose heterodimer with protein S19. Forms two bridges to the 50S subunit in the 70S ribosome.

Located at the top of the head of the 30S subunit, it contacts several helices of the 16S rRNA. In the 70S ribosome it contacts the 23S rRNA (bridge B1a) and protein L5 of the 50S subunit (bridge B1b), connecting the 2 subunits; these bridges are implicated in subunit movement. Contacts the tRNAs in the A and P-sites. This chain is Small ribosomal subunit protein uS13, found in Chlamydia abortus (strain DSM 27085 / S26/3) (Chlamydophila abortus).